The sequence spans 628 residues: 1-deoxy-D-xylulose-5-phosphate synthase (628 aa).

Thiamine diphosphate contacts are provided by residues histidine 72 and 113-115 (GHA). Residue aspartate 144 coordinates Mg(2+). Thiamine diphosphate contacts are provided by residues 145-146 (GA), asparagine 174, tyrosine 287, and glutamate 370. Mg(2+) is bound at residue asparagine 174.

It belongs to the transketolase family. DXPS subfamily. Homodimer. It depends on Mg(2+) as a cofactor. The cofactor is thiamine diphosphate.

The catalysed reaction is D-glyceraldehyde 3-phosphate + pyruvate + H(+) = 1-deoxy-D-xylulose 5-phosphate + CO2. It participates in metabolic intermediate biosynthesis; 1-deoxy-D-xylulose 5-phosphate biosynthesis; 1-deoxy-D-xylulose 5-phosphate from D-glyceraldehyde 3-phosphate and pyruvate: step 1/1. Functionally, catalyzes the acyloin condensation reaction between C atoms 2 and 3 of pyruvate and glyceraldehyde 3-phosphate to yield 1-deoxy-D-xylulose-5-phosphate (DXP). The polypeptide is 1-deoxy-D-xylulose-5-phosphate synthase (Prochlorococcus marinus (strain NATL2A)).